The sequence spans 881 residues: Receptor-like protein 41 (881 aa).

The first 21 residues, 1–21, serve as a signal peptide directing secretion; the sequence is MSELLLRLNFLLLLLLSCVSP. At 22 to 844 the chain is on the extracellular side; sequence SSFVTFNNPV…EEQEQVLNWE (823 aa). Asparagine 58, asparagine 70, asparagine 91, asparagine 109, and asparagine 145 each carry an N-linked (GlcNAc...) asparagine glycan. LRR repeat units follow at residues 97–121, 122–145, 146–169, 170–195, 197–219, 220–244, 245–267, 268–291, 293–317, 319–340, 342–364, 365–390, 391–412, 413–437, 439–462, and 463–486; these read FHEL…KFGM, LNKL…SFSN, LSML…VRNL, RKLR…LFEL, HLTY…EFGN, LNKL…ISNL, TQLT…VQNL, TKLS…LFTM, FLSY…SSSS, LESL…ISKL, NLKE…LFSS, FKSL…SYIS, LTLE…ILKS, LPNL…LWSL, RLSS…ILVN, and SSVQ…PLSI. N-linked (GlcNAc...) asparagine glycosylation occurs at asparagine 189. N-linked (GlcNAc...) asparagine glycans are attached at residues asparagine 243 and asparagine 266. 2 N-linked (GlcNAc...) asparagine glycosylation sites follow: asparagine 305 and asparagine 312. An N-linked (GlcNAc...) asparagine glycan is attached at asparagine 402. An N-linked (GlcNAc...) asparagine glycan is attached at asparagine 462. The stretch at 487–506 is one LRR 17; degenerate repeat; sequence IYFSARYNRFKGDIPLSICN. 2 N-linked (GlcNAc...) asparagine glycosylation sites follow: asparagine 506 and asparagine 519. LRR repeat units lie at residues 507–528, 529–552, 554–576, 578–599, 600–624, 627–651, 701–724, 725–748, 749–772, and 774–797; these read RSSL…PPCL, SNLL…YFAD, PLRS…LLNC, ALQF…YLKV, LPKL…NQGS, FPEL…FFVN, TSSA…IGLL, KALI…LANL, VKIE…LGTL, and FLAY…QITG. Asparagine 575 carries an N-linked (GlcNAc...) asparagine glycan. Asparagine 731 carries N-linked (GlcNAc...) asparagine glycosylation. N-linked (GlcNAc...) asparagine glycosylation is present at asparagine 779. The helical transmembrane segment at 845 to 865 threads the bilayer; that stretch reads GVAIGYGVGVLLGLAIAQLIA. Over 866–881 the chain is Cytoplasmic; that stretch reads SYKPEWLACLIKSRNR.

Belongs to the RLP family.

It localises to the cell membrane. Functionally, may be involved in ABA-induced senescence responses. The sequence is that of Receptor-like protein 41 from Arabidopsis thaliana (Mouse-ear cress).